We begin with the raw amino-acid sequence, 219 residues long: Ribonuclease T (219 aa).

The Exonuclease domain maps to 20-194 (VVIDIETAGF…YDSLQTANLF (175 aa)). Mg(2+) contacts are provided by Asp23, Glu25, His181, and Asp186. The active-site Proton donor/acceptor is the His181.

The protein belongs to the RNase T family. As to quaternary structure, homodimer. Mg(2+) is required as a cofactor.

Its function is as follows. Trims short 3' overhangs of a variety of RNA species, leaving a one or two nucleotide 3' overhang. Responsible for the end-turnover of tRNA: specifically removes the terminal AMP residue from uncharged tRNA (tRNA-C-C-A). Also appears to be involved in tRNA biosynthesis. In Buchnera aphidicola subsp. Schizaphis graminum (strain Sg), this protein is Ribonuclease T.